The sequence spans 246 residues: MAGHSKWANTRHRKAAQDAKRGKIFTKIIRELVTAAKLGGGDPDANPRLRAAVDKALSNNMTRDTLNRAIARGVGGDDDANMETIIYEGYGPGGTAIMIECLSDNRNRTVAEVRHAFSKCGGNLGTDGSVAYLFSKKGVISFEKGDEDTIMEAALEAGAEDVVTYDDGAIDVYTAWEEMGKVRDALEAAGLKADSAEVSMLPSTKADMDAETAPKLMRLIDMLEDCDDVQEVYHNGEISDEVAATL.

The disordered stretch occupies residues 1–20 (MAGHSKWANTRHRKAAQDAK).

Belongs to the TACO1 family.

It localises to the cytoplasm. The protein is Probable transcriptional regulatory protein YebC of Shigella dysenteriae serotype 1 (strain Sd197).